A 139-amino-acid chain; its full sequence is ATP synthase epsilon chain (139 aa).

Belongs to the ATPase epsilon chain family. As to quaternary structure, F-type ATPases have 2 components, CF(1) - the catalytic core - and CF(0) - the membrane proton channel. CF(1) has five subunits: alpha(3), beta(3), gamma(1), delta(1), epsilon(1). CF(0) has three main subunits: a, b and c.

The protein localises to the cell inner membrane. Produces ATP from ADP in the presence of a proton gradient across the membrane. The chain is ATP synthase epsilon chain from Pseudomonas putida (strain ATCC 700007 / DSM 6899 / JCM 31910 / BCRC 17059 / LMG 24140 / F1).